Reading from the N-terminus, the 167-residue chain is uncharacterized protein (167 aa).

The segment at 115–167 (SYRSQPQLGFKSTPPAHSSVFHHSVKAPKEDQAQEAASRPLTSQDGWNPNIKK) is disordered.

This is an uncharacterized protein from Homo sapiens (Human).